Reading from the N-terminus, the 150-residue chain is Transcription antitermination protein NusB (150 aa).

It belongs to the NusB family.

Functionally, involved in transcription antitermination. Required for transcription of ribosomal RNA (rRNA) genes. Binds specifically to the boxA antiterminator sequence of the ribosomal RNA (rrn) operons. The protein is Transcription antitermination protein NusB of Streptococcus equi subsp. zooepidemicus (strain H70).